The sequence spans 487 residues: 4-alpha-glucanotransferase (487 aa).

It belongs to the disproportionating enzyme family.

It is found in the cytoplasm. The enzyme catalyses Transfers a segment of a (1-&gt;4)-alpha-D-glucan to a new position in an acceptor, which may be glucose or a (1-&gt;4)-alpha-D-glucan.. Functionally, catalyzes a disproportionation reaction in which single or multiple glucose units from oligosaccharides are transferred to the 4-hydroxyl group of acceptor sugars. Glucose, maltose and maltotriose can act as acceptor, whereas of the three only maltotriose can act as donor. The protein is 4-alpha-glucanotransferase (malQ) of Clostridium butyricum.